The chain runs to 74 residues: Putative defensin-like protein 12 (74 aa).

The signal sequence occupies residues 1 to 26 (MAKPCAAFLVFLCLSMLILSIPDISC). 3 cysteine pairs are disulfide-bonded: Cys-26–Cys-50, Cys-33–Cys-59, and Cys-39–Cys-61.

Belongs to the DEFL family.

It localises to the secreted. This Arabidopsis thaliana (Mouse-ear cress) protein is Putative defensin-like protein 12.